Here is a 193-residue protein sequence, read N- to C-terminus: DNA damage-inducible transcript 4-like protein (193 aa).

This sequence belongs to the DDIT4 family. In terms of tissue distribution, up-regulated in atherosclerotic plaques relative to healthy segments of the same artery.

It localises to the cytoplasm. In terms of biological role, inhibits cell growth by regulating the TOR signaling pathway upstream of the TSC1-TSC2 complex and downstream of AKT1. The chain is DNA damage-inducible transcript 4-like protein (DDIT4L) from Homo sapiens (Human).